Here is an 858-residue protein sequence, read N- to C-terminus: Zinc finger protein ZXDC (858 aa).

3 disordered regions span residues Met1 to Ser73, Asp85 to Ala108, and Ala142 to Ala175. A compositionally biased stretch (pro residues) spans Ala59–Glu68. Over residues Ala142–Pro152 the composition is skewed to low complexity. 10 C2H2-type zinc fingers span residues Tyr176 to His200, Phe209 to His233, Phe239 to His263, Phe269 to His291, Tyr298 to His322, Phe329 to His353, Phe359 to His383, Phe389 to His413, Phe419 to His443, and Ser452 to His477. Over residues Asp624 to Leu634 the composition is skewed to polar residues. Positions Asp624 to Ser652 are disordered. Over residues Thr635–Gly651 the composition is skewed to low complexity. Residue Lys661 forms a Glycyl lysine isopeptide (Lys-Gly) (interchain with G-Cter in SUMO) linkage. 2 disordered regions span residues Asp671–Gly714 and Val727–Gly751. Residues Gly681 to Glu692 show a composition bias toward polar residues.

Belongs to the ZXD family. As to quaternary structure, self-associates. Interacts with ZXDB and CIITA. In terms of processing, sumoylated at Lys-661 with SUMO1, SUMO2 and SUMO3; sumoylation enhances the activity of the transcriptional activation domain.

Its subcellular location is the nucleus. Its function is as follows. Cooperates with CIITA to promote transcription of MHC class I and MHC class II genes. The polypeptide is Zinc finger protein ZXDC (Zxdc) (Mus musculus (Mouse)).